We begin with the raw amino-acid sequence, 252 residues long: MIEKDFVKEGLKRTRIDEYLETKLERAGYGGMDIQVTPVGTMVIVYAEKPGMVIGRGGKTVRAITKTLKNNFDLENPQVEVKEVDVPELNPRIMAHKVVAMLQRGMQFRRVAYSIIRRIMSAGAQGVEVTISGKIRGSRSACAKFNEGYIKKCGEPSIKYVKEGFATVQLKPGVLGIYVRIMPPEVTLPDNIEISEPEIVDVEEPVAQEVPEVQESEIVEEITGEDILEELSEESEIEEITEEIEDVETLEE.

Positions 16–85 (IDEYLETKLE…NPQVEVKEVD (70 aa)) constitute a KH type-2 domain. Residues 233 to 252 (EESEIEEITEEIEDVETLEE) are disordered.

This sequence belongs to the universal ribosomal protein uS3 family. As to quaternary structure, part of the 30S ribosomal subunit.

Binds the lower part of the 30S subunit head. This Methanosphaera stadtmanae (strain ATCC 43021 / DSM 3091 / JCM 11832 / MCB-3) protein is Small ribosomal subunit protein uS3.